The sequence spans 341 residues: Putative methyltransferase YGR283C (341 aa).

The protein belongs to the class IV-like SAM-binding methyltransferase superfamily.

It is found in the nucleus. It localises to the nucleolus. The sequence is that of Putative methyltransferase YGR283C from Saccharomyces cerevisiae (strain ATCC 204508 / S288c) (Baker's yeast).